The sequence spans 369 residues: RING-H2 finger protein ATL47 (369 aa).

Residues 52-72 form a helical membrane-spanning segment; sequence IILFIIVLLSVIFFICSILHL. The RING-type; atypical zinc finger occupies 144-186; that stretch reads CAVCLCEFSEDDKLRLLPNCSHAFHIDCIDTWLLSNSTCPLCR. Residues 332 to 355 are disordered; the sequence is NNHPSETNLVVGGSSSSSSYVCSG. Residues 341–355 show a composition bias toward low complexity; that stretch reads VVGGSSSSSSYVCSG.

It belongs to the RING-type zinc finger family. ATL subfamily.

The protein localises to the membrane. It carries out the reaction S-ubiquitinyl-[E2 ubiquitin-conjugating enzyme]-L-cysteine + [acceptor protein]-L-lysine = [E2 ubiquitin-conjugating enzyme]-L-cysteine + N(6)-ubiquitinyl-[acceptor protein]-L-lysine.. It participates in protein modification; protein ubiquitination. This Arabidopsis thaliana (Mouse-ear cress) protein is RING-H2 finger protein ATL47 (ATL47).